Reading from the N-terminus, the 147-residue chain is Probable 4-amino-4-deoxy-L-arabinose-phosphoundecaprenol flippase subunit ArnF (147 aa).

The Cytoplasmic segment spans residues 1 to 23; it reads MSNDHPQGQLPASPARSALKGYL. The chain crosses the membrane as a helical span at residues 24–44; the sequence is YVLGSILLVTAAQLGMKWGVI. Over 45–62 the chain is Periplasmic; sequence QLPTWQMDLAVMLAHPLP. Residues 63–83 traverse the membrane as a helical segment; it reads LLVILAGVGCYALSLLCWLAA. Residues 84–93 are Cytoplasmic-facing; the sequence is LHSTPLNIAY. A helical transmembrane segment spans residues 94 to 114; it reads PLLSTSYALVYLLAVNIPLFA. The Periplasmic portion of the chain corresponds to 115-121; that stretch reads EPLEPGK. Residues 122-142 traverse the membrane as a helical segment; the sequence is ALGVLFILLGAVLVGIKPAAG. The Cytoplasmic portion of the chain corresponds to 143 to 147; it reads TKQTG.

Belongs to the ArnF family. As to quaternary structure, heterodimer of ArnE and ArnF.

The protein localises to the cell inner membrane. The protein operates within bacterial outer membrane biogenesis; lipopolysaccharide biosynthesis. Translocates 4-amino-4-deoxy-L-arabinose-phosphoundecaprenol (alpha-L-Ara4N-phosphoundecaprenol) from the cytoplasmic to the periplasmic side of the inner membrane. The sequence is that of Probable 4-amino-4-deoxy-L-arabinose-phosphoundecaprenol flippase subunit ArnF from Aeromonas hydrophila subsp. hydrophila (strain ATCC 7966 / DSM 30187 / BCRC 13018 / CCUG 14551 / JCM 1027 / KCTC 2358 / NCIMB 9240 / NCTC 8049).